The chain runs to 123 residues: Defensin beta 118 (123 aa).

The signal sequence occupies residues 1–19; that stretch reads MKLLLLALPMLVLLPQVIP. Cystine bridges form between Cys27/Cys54, Cys34/Cys48, and Cys38/Cys55. Residues 65–123 constitute a propeptide that is removed on maturation; that stretch reads VPTTSPTPLSDSTRGVIDDILTVRFTTDYFEVSSKKNMVEESEVGQGTQTSLPNVHHSS. Positions 100 to 123 are disordered; it reads KNMVEESEVGQGTQTSLPNVHHSS. Over residues 109–123 the composition is skewed to polar residues; sequence GQGTQTSLPNVHHSS.

The protein belongs to the beta-defensin family. Post-translationally, the three-dimensional structure formed by the three intramolecular disulfide bridges is indispensable for antimicrobial activity.

The protein resides in the secreted. Host defense peptide that exhibits antimicrobial activity against both Gram-negative bacteria, such as E.coli and S.typhimurium, and Gram-positive bacteria, such as S.aureus and B.subtilis. Inhibits cell adhesion of E.coli on intestinal epithelial enterocytes. Causes rapid permeabilization of both the outer and inner membrane of E.coli, leading to morphological alterations on the bacterial surface. Binds to bacterial lipopolysaccharides (LPS) with high affinity, and may thereby be involved in immunoregulation through LPS neutralization. May contribute to epididymal innate immunity and protect the sperm against attack by microorganisms. The chain is Defensin beta 118 (DEFB118) from Pongo pygmaeus (Bornean orangutan).